Here is a 262-residue protein sequence, read N- to C-terminus: Acyl-[acyl-carrier-protein]--UDP-N-acetylglucosamine O-acyltransferase (262 aa).

It belongs to the transferase hexapeptide repeat family. LpxA subfamily. Homotrimer.

The protein resides in the cytoplasm. It carries out the reaction a (3R)-hydroxyacyl-[ACP] + UDP-N-acetyl-alpha-D-glucosamine = a UDP-3-O-[(3R)-3-hydroxyacyl]-N-acetyl-alpha-D-glucosamine + holo-[ACP]. Its pathway is glycolipid biosynthesis; lipid IV(A) biosynthesis; lipid IV(A) from (3R)-3-hydroxytetradecanoyl-[acyl-carrier-protein] and UDP-N-acetyl-alpha-D-glucosamine: step 1/6. Involved in the biosynthesis of lipid A, a phosphorylated glycolipid that anchors the lipopolysaccharide to the outer membrane of the cell. The protein is Acyl-[acyl-carrier-protein]--UDP-N-acetylglucosamine O-acyltransferase of Yersinia enterocolitica serotype O:8 / biotype 1B (strain NCTC 13174 / 8081).